The chain runs to 1366 residues: DNA-directed RNA polymerase subunit beta (1366 aa).

It belongs to the RNA polymerase beta chain family. The RNAP catalytic core consists of 2 alpha, 1 beta, 1 beta' and 1 omega subunit. When a sigma factor is associated with the core the holoenzyme is formed, which can initiate transcription.

The catalysed reaction is RNA(n) + a ribonucleoside 5'-triphosphate = RNA(n+1) + diphosphate. Functionally, DNA-dependent RNA polymerase catalyzes the transcription of DNA into RNA using the four ribonucleoside triphosphates as substrates. This chain is DNA-directed RNA polymerase subunit beta, found in Marinomonas sp. (strain MWYL1).